A 65-amino-acid polypeptide reads, in one-letter code: Antitoxin VapB32 (65 aa).

A disordered region spans residues A46–R65.

In terms of biological role, antitoxin component of a type II toxin-antitoxin (TA) system. In Mycobacterium tuberculosis (strain CDC 1551 / Oshkosh), this protein is Antitoxin VapB32 (vapB32).